The chain runs to 405 residues: CLIP domain-containing serine protease B8 (405 aa).

The signal sequence occupies residues 1–24 (MSSAVLLLLVCGCALAVLSPVAYG). 3 cysteine pairs are disulfide-bonded: Cys-41/Cys-94, Cys-52/Cys-84, and Cys-58/Cys-95. Residues 41 to 95 (CDIPNEPNPGQCMLPAECVAYGKINDVSSLSSIERFSFIKQIQCNGSDTVPYVCC) enclose the Clip domain. Residues Asn-85 and Asn-108 are each glycosylated (N-linked (GlcNAc...) asparagine). The Peptidase S1 domain occupies 137 to 404 (IRGGQLAEID…YLPWIKMYTG (268 aa)). A disulfide bond links Cys-167 and Cys-183. Active-site charge relay system residues include His-182 and Asp-249. Disulfide bonds link Cys-322–Cys-339 and Cys-349–Cys-380. Catalysis depends on Ser-353, which acts as the Charge relay system.

It belongs to the peptidase S1 family. CLIP subfamily. Post-translationally, proteolytic cleavage is necessary for activation. Cleaved and activated by CLIPB4.

It is found in the secreted. Functionally, serine protease that functions in the melanization-mediated immune response. Preferentially, cleaves substrates with an arginine at the P1 site. May be involved in the activation of the prophenoloxidase cascade upstream of CLIPB9; does not cleave prophenoloxidase. This chain is CLIP domain-containing serine protease B8, found in Anopheles gambiae (African malaria mosquito).